The sequence spans 421 residues: Histidine--tRNA ligase (421 aa).

Belongs to the class-II aminoacyl-tRNA synthetase family. Homodimer.

Its subcellular location is the cytoplasm. It catalyses the reaction tRNA(His) + L-histidine + ATP = L-histidyl-tRNA(His) + AMP + diphosphate + H(+). This chain is Histidine--tRNA ligase, found in Fervidobacterium nodosum (strain ATCC 35602 / DSM 5306 / Rt17-B1).